We begin with the raw amino-acid sequence, 145 residues long: Hemoglobin subunit beta (145 aa).

The Globin domain maps to 1–145 (MLTAEEKAAV…VANALAHRYH (145 aa)). Residue T11 is modified to Phosphothreonine. S43 carries the post-translational modification Phosphoserine. At K58 the chain carries N6-acetyllysine. H62 lines the heme b pocket. K81 carries the post-translational modification N6-acetyllysine. Heme b is bound at residue H91. C92 bears the S-nitrosocysteine mark.

Belongs to the globin family. In terms of assembly, heterotetramer of two alpha chains and two beta chains. As to expression, red blood cells.

In terms of biological role, involved in oxygen transport from the lung to the various peripheral tissues. The chain is Hemoglobin subunit beta (HBB) from Bos mutus grunniens (Wild yak).